The following is an 877-amino-acid chain: MSSVPPVLSGSEIRSKFLEFFNQRQHPILPSASLVPEDPTVLLTIAGMLPFKPIFLGQQDAPSPRATTSQKCIRTNDIENVGRTARHHTFFEMLGNFSFGDYFKEQAIAWAWELSTEVFQLDPKNIVVSVFREDDEAFEIWRDKVGVNPKRIIRMGEEDNFWKSGPTGPCGPCSELYYDFKPELGDDNIDLEDDTRFIEYYNLVFMQYNRDAEGHLTPLQNKNIDTGMGLERMAQILQQVPNNYETDLIFPIIETAAKAAGIHYEKADEKTKVSLKVIGDHVRSVVHMIADGITASNTDRGYVLRRLIRRVVRHGRLIGIDGNFINQVAETAIQLSEAAYPNTRERESFIKQELEREENNFLKTLERGEKLLADIIAKEEKQISGVDAFTLFDTFGFPFELTQEIAEENGLTVDAEGYQAEMKKQQERSKAAHETIDLTVQGSLDELAEHIHPTAFLGYTDLQSQVKIEAVLVDGHRVETAEAGVVVQLICNQTPFYAESGGQIGDRGYFSGDQLVVRINDVQKESGFFVHHGKVERGSLTVGDTVNATIDRACRRRAQANHTATHLLQAALKNIVDDSISQAGSLVDFDRLRFDFNCPRALTAAELTQIEAQINTWIAEAHEGQVAVMPIAEAKAKGAVAMFGEKYGEEVRVVDFPGVSMELCGGTHVKNTAEIGLFKIISETGISSGIRRIEAVAGPAVLEYLKVRDQVVKDLGDKFKAKPEEITERVENIQAELRNTQKELEKVKAELAIAKSEALVSQAETVGEFQILVENMGDLDAKALQTAAERLQQKLGEAAVVLGSTPEDGKVSLVAAFSEGIYKGKKVQAGKFIGGIAKLCGGGGGGRPNLAQAGGRDASKLPEALHTAKQQLRETLG.

Zn(2+)-binding residues include His-562, His-566, Cys-664, and His-668.

The protein belongs to the class-II aminoacyl-tRNA synthetase family. Requires Zn(2+) as cofactor.

The protein resides in the cytoplasm. It catalyses the reaction tRNA(Ala) + L-alanine + ATP = L-alanyl-tRNA(Ala) + AMP + diphosphate. In terms of biological role, catalyzes the attachment of alanine to tRNA(Ala) in a two-step reaction: alanine is first activated by ATP to form Ala-AMP and then transferred to the acceptor end of tRNA(Ala). Also edits incorrectly charged Ser-tRNA(Ala) and Gly-tRNA(Ala) via its editing domain. The sequence is that of Alanine--tRNA ligase from Picosynechococcus sp. (strain ATCC 27264 / PCC 7002 / PR-6) (Agmenellum quadruplicatum).